Reading from the N-terminus, the 294-residue chain is Glyceraldehyde-3-phosphate dehydrogenase (294 aa).

Positions 19, 63, and 105 each coordinate NAD(+). Residues 134–136 (SCT) and T165 contribute to the D-glyceraldehyde 3-phosphate site. C135 serves as the catalytic Nucleophile. Positions 169 to 188 (KTVDGPSHKDWRGGRGASQN) are disordered. Residues 194–195 (TG) and R217 contribute to the D-glyceraldehyde 3-phosphate site.

The protein belongs to the glyceraldehyde-3-phosphate dehydrogenase family. In terms of assembly, homotetramer.

The protein resides in the cytoplasm. The catalysed reaction is D-glyceraldehyde 3-phosphate + phosphate + NAD(+) = (2R)-3-phospho-glyceroyl phosphate + NADH + H(+). It functions in the pathway carbohydrate degradation; glycolysis; pyruvate from D-glyceraldehyde 3-phosphate: step 1/5. In terms of biological role, catalyzes the oxidative phosphorylation of glyceraldehyde 3-phosphate (G3P) to 1,3-bisphosphoglycerate (BPG) using the cofactor NAD. The first reaction step involves the formation of a hemiacetal intermediate between G3P and a cysteine residue, and this hemiacetal intermediate is then oxidized to a thioester, with concomitant reduction of NAD to NADH. The reduced NADH is then exchanged with the second NAD, and the thioester is attacked by a nucleophilic inorganic phosphate to produce BPG. The protein is Glyceraldehyde-3-phosphate dehydrogenase (gap) of Citrobacter freundii.